The chain runs to 438 residues: Methionine aminopeptidase 2 (438 aa).

The interval methionine 1–glycine 89 is disordered. Basic and acidic residues predominate over residues glutamate 10–lysine 20. A compositionally biased stretch (basic residues) spans alanine 51–alanine 65. Substrate is bound at residue histidine 191. 3 residues coordinate a divalent metal cation: aspartate 211, aspartate 222, and histidine 291. Residue histidine 299 participates in substrate binding. Residues glutamate 324 and glutamate 419 each contribute to the a divalent metal cation site.

The protein belongs to the peptidase M24A family. Methionine aminopeptidase eukaryotic type 2 subfamily. The cofactor is Co(2+). Requires Zn(2+) as cofactor. Mn(2+) serves as cofactor. It depends on Fe(2+) as a cofactor.

The protein localises to the cytoplasm. It carries out the reaction Release of N-terminal amino acids, preferentially methionine, from peptides and arylamides.. Its function is as follows. Cotranslationally removes the N-terminal methionine from nascent proteins. The N-terminal methionine is often cleaved when the second residue in the primary sequence is small and uncharged (Met-Ala-, Cys, Gly, Pro, Ser, Thr, or Val). The chain is Methionine aminopeptidase 2 from Sordaria macrospora (strain ATCC MYA-333 / DSM 997 / K(L3346) / K-hell).